The chain runs to 858 residues: Potassium channel KOR1 (858 aa).

Residues 1–41 (MGRGIGSKRRVEDDDGENMPGRKKKEEEEEEEDDDGEEEYE) form a disordered region. Over 1 to 102 (MGRGIGSKRR…PDNKWYRLWT (102 aa)) the chain is Cytoplasmic. Residues 27–41 (EEEEEEDDDGEEEYE) show a composition bias toward acidic residues. A helical transmembrane segment spans residues 103 to 123 (RFILVWAVYSSFFTPLEFGFF). The Extracellular segment spans residues 124 to 130 (RGLPRNL). Residues 131–151 (FFLDIAGQIAFLIDIVLRFFV) traverse the membrane as a helical segment. Topologically, residues 152–174 (AYRDPDTYRMVHNPTSIALRYCK) are cytoplasmic. The chain crosses the membrane as a helical span at residues 175–195 (SSFIFDLLGCFPWDAIYKACG). At 196 to 201 (SKEEVR) the chain is on the extracellular side. A helical; Voltage-sensor transmembrane segment spans residues 202 to 222 (YLLWIRLTRAMKVTEFFRSME). The Cytoplasmic portion of the chain corresponds to 223-236 (KDIRINYLFTRIVK). The helical transmembrane segment at 237–257 (LIVVELYCTHTAACIFYYLAT) threads the bilayer. The Extracellular segment spans residues 258–292 (TLPESMEGYTWIGSLQLGDYSYSHFREIDLTKRYM). Residues 293 to 312 (TSLYFAIVTMATVGYGDIHA) constitute an intramembrane region (pore-forming). Topologically, residues 313–316 (VNVR) are extracellular. Residues 317–337 (EMIFIMIYVSFDMILGAYLIG) traverse the membrane as a helical segment. Residues 338 to 858 (NMTALIVKGS…GDDGGTEARQ (521 aa)) lie on the Cytoplasmic side of the membrane. 419–539 (LFKGCSAEFI…RRILSNLSES (121 aa)) contributes to the a nucleoside 3',5'-cyclic phosphate binding site. ANK repeat units follow at residues 559–592 (KQEA…DPKN), 596–625 (DGRS…DIDL), 629–658 (FGNT…KLSL), 660–689 (NAGS…DPNA), 693–722 (DHRA…SVFA), and 726–756 (WGTT…ELSR). The KHA domain maps to 772 to 858 (RCSVFPHHPW…GDDGGTEARQ (87 aa)).

Belongs to the potassium channel family. Plant (TC 1.A.1.4) subfamily.

Its subcellular location is the membrane. Probable outward-rectifying potassium channel. This is Potassium channel KOR1 from Oryza sativa subsp. japonica (Rice).